A 298-amino-acid chain; its full sequence is tRNA pseudouridine synthase B (298 aa).

The active-site Nucleophile is Asp-39.

Belongs to the pseudouridine synthase TruB family. Type 1 subfamily.

The enzyme catalyses uridine(55) in tRNA = pseudouridine(55) in tRNA. In terms of biological role, responsible for synthesis of pseudouridine from uracil-55 in the psi GC loop of transfer RNAs. The polypeptide is tRNA pseudouridine synthase B (Oenococcus oeni (strain ATCC BAA-331 / PSU-1)).